An 864-amino-acid chain; its full sequence is DNA mismatch repair protein MutS (864 aa).

Residue 607-614 (GPNMGGKS) coordinates ATP.

Belongs to the DNA mismatch repair MutS family.

In terms of biological role, this protein is involved in the repair of mismatches in DNA. It is possible that it carries out the mismatch recognition step. This protein has a weak ATPase activity. This chain is DNA mismatch repair protein MutS, found in Neisseria gonorrhoeae (strain ATCC 700825 / FA 1090).